A 166-amino-acid chain; its full sequence is NAD(P)H-quinone oxidoreductase subunit I, chloroplastic (166 aa).

4Fe-4S ferredoxin-type domains follow at residues 55-84 (GRIH…VDWK) and 95-124 (LNYS…MTEE). C64, C67, C70, C74, C104, C107, C110, and C114 together coordinate [4Fe-4S] cluster.

It belongs to the complex I 23 kDa subunit family. In terms of assembly, NDH is composed of at least 16 different subunits, 5 of which are encoded in the nucleus. It depends on [4Fe-4S] cluster as a cofactor.

The protein localises to the plastid. It localises to the chloroplast thylakoid membrane. It catalyses the reaction a plastoquinone + NADH + (n+1) H(+)(in) = a plastoquinol + NAD(+) + n H(+)(out). The enzyme catalyses a plastoquinone + NADPH + (n+1) H(+)(in) = a plastoquinol + NADP(+) + n H(+)(out). Functionally, NDH shuttles electrons from NAD(P)H:plastoquinone, via FMN and iron-sulfur (Fe-S) centers, to quinones in the photosynthetic chain and possibly in a chloroplast respiratory chain. The immediate electron acceptor for the enzyme in this species is believed to be plastoquinone. Couples the redox reaction to proton translocation, and thus conserves the redox energy in a proton gradient. The polypeptide is NAD(P)H-quinone oxidoreductase subunit I, chloroplastic (Acanthospermum australe (Paraguayan starburr)).